Here is a 391-residue protein sequence, read N- to C-terminus: Elongation factor Tu (391 aa).

Residues 10 to 201 (KPHVNIGTIG…AVDAYIPTPE (192 aa)) enclose the tr-type G domain. Residues 19 to 26 (GHVDHGKT) are G1. 19–26 (GHVDHGKT) contributes to the GTP binding site. Residue Thr-26 participates in Mg(2+) binding. A G2 region spans residues 55 to 59 (GITIS). Residues 76–79 (DCPG) form a G3 region. Residues 76-80 (DCPGH) and 131-134 (NKVD) each bind GTP. The interval 131-134 (NKVD) is G4. The interval 169 to 171 (SAL) is G5.

The protein belongs to the TRAFAC class translation factor GTPase superfamily. Classic translation factor GTPase family. EF-Tu/EF-1A subfamily. Monomer.

It localises to the cytoplasm. The enzyme catalyses GTP + H2O = GDP + phosphate + H(+). GTP hydrolase that promotes the GTP-dependent binding of aminoacyl-tRNA to the A-site of ribosomes during protein biosynthesis. The polypeptide is Elongation factor Tu (Rhizobium meliloti (strain 1021) (Ensifer meliloti)).